Here is a 305-residue protein sequence, read N- to C-terminus: Ribosomal RNA large subunit methyltransferase F (305 aa).

It belongs to the methyltransferase superfamily. METTL16/RlmF family.

The protein localises to the cytoplasm. It catalyses the reaction adenosine(1618) in 23S rRNA + S-adenosyl-L-methionine = N(6)-methyladenosine(1618) in 23S rRNA + S-adenosyl-L-homocysteine + H(+). Its function is as follows. Specifically methylates the adenine in position 1618 of 23S rRNA. In Bacteroides fragilis (strain YCH46), this protein is Ribosomal RNA large subunit methyltransferase F.